Here is a 344-residue protein sequence, read N- to C-terminus: Tetraacyldisaccharide 4'-kinase (344 aa).

Position 68 to 75 (68 to 75) interacts with ATP; it reads TAGGNGKT.

It belongs to the LpxK family.

It catalyses the reaction a lipid A disaccharide + ATP = a lipid IVA + ADP + H(+). The protein operates within glycolipid biosynthesis; lipid IV(A) biosynthesis; lipid IV(A) from (3R)-3-hydroxytetradecanoyl-[acyl-carrier-protein] and UDP-N-acetyl-alpha-D-glucosamine: step 6/6. Transfers the gamma-phosphate of ATP to the 4'-position of a tetraacyldisaccharide 1-phosphate intermediate (termed DS-1-P) to form tetraacyldisaccharide 1,4'-bis-phosphate (lipid IVA). The protein is Tetraacyldisaccharide 4'-kinase of Photobacterium profundum (strain SS9).